Consider the following 429-residue polypeptide: MSVIAITVFIVTYALIASDRVNKTLAALTGAAIVVTLPIINSEDVFYSHETGIDWEVIFLLLSMMIIVSVLRQTGVFEYVAIWTAKRSHGSPLRILLLLVLVMALGSALLDNVTTVLLIAPVTLLVCERLTINAAPFLMAEVFASNIGGAATLVGDPPNIIIASRAGFSFNDFLIHLTPIVIIVTVVLSALLPRLFRGAFAVDPERVADIMSLNEREAIRDRWLLIKCGVVLLLVFVAFIAHPVLHTGPSLVGMLGAGILIVISKLERSDYLSSVKWETLLFFAGLFIMVGALVKTDVVNQLARATTTLTGGHELLTVVLTLGVSTLVSSIIDNIPYVATMTPIVSELVASMPDQSHTDILWWALALGADFGGNLTAVGASANVVMLEIAKSAGTPISFWEFTRKGIAVTVISIALAGIYLWLRYLVMS.

Helical transmembrane passes span 26 to 46 (AALT…EDVF), 51 to 71 (TGID…VSVL), 99 to 119 (LVLV…VLLI), 173 to 193 (FLIH…ALLP), 224 to 244 (LLIK…AHPV), 279 to 299 (TLLF…TDVV), 315 to 335 (LLTV…IDNI), 360 to 380 (ILWW…AVGA), and 407 to 427 (IAVT…RYLV).

The protein belongs to the CitM (TC 2.A.11) transporter family.

It localises to the cell membrane. The chain is 46 kDa membrane protein (ag45) from Mycobacterium leprae (strain TN).